The chain runs to 121 residues: Apoptin (121 aa).

Disordered stretches follow at residues 1–28 (MNAL…LETP) and 57–121 (LRSA…CIRL). Over residues 58 to 70 (RSATADNSESTGF) the composition is skewed to polar residues. The segment covering 88–102 (RSCDPSEYRVSELKE) has biased composition (basic and acidic residues).

The protein belongs to the gyrovirus apoptin family.

Its subcellular location is the host nucleus. In terms of biological role, may act as transcriptional regulator. Induces apoptosis in infected cells. Element of infectious replication cycle. This Gallus gallus (Chicken) protein is Apoptin (VP3).